The chain runs to 438 residues: UDP-N-acetyl-D-mannosamine dehydrogenase (438 aa).

Tyrosine 21, isoleucine 22, aspartate 41, arginine 46, threonine 93, and threonine 131 together coordinate NAD(+). Residues arginine 160, valine 161, lysine 212, asparagine 216, arginine 219, histidine 250, arginine 252, and glycine 263 each contribute to the UDP-N-acetyl-alpha-D-mannosaminouronate site. The active-site Proton donor/acceptor is lysine 212. Residue cysteine 266 is the Nucleophile of the active site. The UDP-N-acetyl-alpha-D-mannosaminouronate site is built by tyrosine 323 and lysine 324. Arginine 331 serves as a coordination point for NAD(+). Lysine 409 contacts UDP-N-acetyl-alpha-D-mannosaminouronate.

This sequence belongs to the UDP-glucose/GDP-mannose dehydrogenase family. Homotetramer; probably dimer of dimers.

It carries out the reaction UDP-N-acetyl-alpha-D-mannosamine + 2 NAD(+) + H2O = UDP-N-acetyl-alpha-D-mannosaminouronate + 2 NADH + 3 H(+). Its function is as follows. Catalyzes the four-electron oxidation of UDP-N-acetyl-D-mannosamine (UDP-ManNAc), reducing NAD(+) and releasing UDP-N-acetylmannosaminuronic acid (UDP-ManNAcA). The sequence is that of UDP-N-acetyl-D-mannosamine dehydrogenase (wecC) from Methanococcus aeolicus (strain ATCC BAA-1280 / DSM 17508 / OCM 812 / Nankai-3).